We begin with the raw amino-acid sequence, 147 residues long: Large ribosomal subunit protein bL9 (147 aa).

Belongs to the bacterial ribosomal protein bL9 family.

Its function is as follows. Binds to the 23S rRNA. This Cytophaga hutchinsonii (strain ATCC 33406 / DSM 1761 / CIP 103989 / NBRC 15051 / NCIMB 9469 / D465) protein is Large ribosomal subunit protein bL9.